Reading from the N-terminus, the 95-residue chain is MDTCNVSLQILPSVEDSRLYEVVDKVIEYIESTGVKFEVGPMETTMEGKIDDLLEIVKKSQEICIEEGAGRVISIVKIDYKKGGVTMDEKVGKYR.

Belongs to the UPF0045 family.

The chain is UPF0045 protein CPE1503 from Clostridium perfringens (strain 13 / Type A).